The sequence spans 333 residues: 4-hydroxy-3-methylbut-2-enyl diphosphate reductase (333 aa).

Cys20 serves as a coordination point for [4Fe-4S] cluster. His49 and His85 together coordinate (2E)-4-hydroxy-3-methylbut-2-enyl diphosphate. Dimethylallyl diphosphate is bound by residues His49 and His85. Positions 49 and 85 each coordinate isopentenyl diphosphate. Cys107 provides a ligand contact to [4Fe-4S] cluster. His135 is a binding site for (2E)-4-hydroxy-3-methylbut-2-enyl diphosphate. His135 is a dimethylallyl diphosphate binding site. His135 serves as a coordination point for isopentenyl diphosphate. Glu137 serves as the catalytic Proton donor. Position 176 (Thr176) interacts with (2E)-4-hydroxy-3-methylbut-2-enyl diphosphate. Cys206 lines the [4Fe-4S] cluster pocket. (2E)-4-hydroxy-3-methylbut-2-enyl diphosphate-binding residues include Ser234, Ser235, Asn236, and Ser279. Dimethylallyl diphosphate-binding residues include Ser234, Ser235, Asn236, and Ser279. Isopentenyl diphosphate contacts are provided by Ser234, Ser235, Asn236, and Ser279.

This sequence belongs to the IspH family. Requires [4Fe-4S] cluster as cofactor.

It catalyses the reaction isopentenyl diphosphate + 2 oxidized [2Fe-2S]-[ferredoxin] + H2O = (2E)-4-hydroxy-3-methylbut-2-enyl diphosphate + 2 reduced [2Fe-2S]-[ferredoxin] + 2 H(+). The enzyme catalyses dimethylallyl diphosphate + 2 oxidized [2Fe-2S]-[ferredoxin] + H2O = (2E)-4-hydroxy-3-methylbut-2-enyl diphosphate + 2 reduced [2Fe-2S]-[ferredoxin] + 2 H(+). It participates in isoprenoid biosynthesis; dimethylallyl diphosphate biosynthesis; dimethylallyl diphosphate from (2E)-4-hydroxy-3-methylbutenyl diphosphate: step 1/1. Its pathway is isoprenoid biosynthesis; isopentenyl diphosphate biosynthesis via DXP pathway; isopentenyl diphosphate from 1-deoxy-D-xylulose 5-phosphate: step 6/6. Catalyzes the conversion of 1-hydroxy-2-methyl-2-(E)-butenyl 4-diphosphate (HMBPP) into a mixture of isopentenyl diphosphate (IPP) and dimethylallyl diphosphate (DMAPP). Acts in the terminal step of the DOXP/MEP pathway for isoprenoid precursor biosynthesis. This chain is 4-hydroxy-3-methylbut-2-enyl diphosphate reductase, found in Rhizobium leguminosarum bv. trifolii (strain WSM2304).